The chain runs to 138 residues: Putative pre-16S rRNA nuclease (138 aa).

This sequence belongs to the YqgF nuclease family.

The protein resides in the cytoplasm. Its function is as follows. Could be a nuclease involved in processing of the 5'-end of pre-16S rRNA. In Klebsiella pneumoniae subsp. pneumoniae (strain ATCC 700721 / MGH 78578), this protein is Putative pre-16S rRNA nuclease.